The chain runs to 152 residues: Putative RRN3-like protein RRN3P1 (152 aa).

Belongs to the RRN3 family.

This chain is Putative RRN3-like protein RRN3P1 (RRN3P1), found in Homo sapiens (Human).